The primary structure comprises 307 residues: MVSGSKAGVSPHREIEVMRQSIDDHLAGLLPETDSQDIVSLAMREGVMAPGKRIRPLLMLLAARDLRYQGSMPTLLDLACAVELTHTASLMLDDMPCMDNAELRRGQPTTHKKFGESVAILASVGLLSKAFGLIAATGDLPGERRAQAVNELSTAVGVQGLVLGQFRDLNDAALDRTPDAILSTNHLKTGILFSAMLQIVAIASASSPSTRETLHAFALDFGQAFQLLDDLRDDHPETGKDRNKDAGKSTLVNRLGADAARQKLREHIDSADKHLTFACPQGGAIRQFMHLWFGHHLADWSPVMKIA.

Isopentenyl diphosphate contacts are provided by Lys52, Arg55, and His86. Mg(2+) is bound by residues Asp93 and Asp99. Arg104 is a (2E,6E)-farnesyl diphosphate binding site. Residue Arg105 coordinates isopentenyl diphosphate. Residues Lys188, Thr189, and Gln226 each coordinate (2E,6E)-farnesyl diphosphate.

This sequence belongs to the FPP/GGPP synthase family. Mg(2+) serves as cofactor.

The enzyme catalyses isopentenyl diphosphate + (2E,6E)-farnesyl diphosphate = (2E,6E,10E)-geranylgeranyl diphosphate + diphosphate. It functions in the pathway isoprenoid biosynthesis; geranylgeranyl diphosphate biosynthesis; geranylgeranyl diphosphate from farnesyl diphosphate and isopentenyl diphosphate: step 1/1. Catalyzes the condensation of farnesyl diphosphate (FPP) and isopentenyl diphosphate (IPP) to yield geranylgeranyl diphosphate (GGPP) needed for biosynthesis of carotenoids and diterpenes. This Pseudescherichia vulneris (Escherichia vulneris) protein is Geranylgeranyl diphosphate synthase (crtE).